The chain runs to 384 residues: DNA repair protein RAD51 homolog 2 (384 aa).

Residues 1-75 form an interaction with RAD51C region; sequence MGSKKLKRVG…TAYGIKAQRS (75 aa). 108–115 serves as a coordination point for ATP; it reads GPPGCGKT.

Belongs to the RecA family. RAD51 subfamily. As to quaternary structure, part of the BCDX2 complex consisting of RAD51B, RAD51C, RAD51D and XRCC2; the complex has a ring-like structure arranged into a flat disc around a central channel. The BCDX2 subcomplex RAD51B:RAD51C interacts with RAD51. Interacts with SWSAP1; involved in homologous recombination repair. Interacts with HELQ. Post-translationally, phosphorylated on tyrosine residues by BCR-ABL. Expressed in a wide range of tissues.

It is found in the nucleus. In terms of biological role, involved in the homologous recombination repair (HRR) pathway of double-stranded DNA breaks arising during DNA replication or induced by DNA-damaging agents. May promote the assembly of presynaptic RAD51 nucleoprotein filaments. Binds single-stranded DNA and double-stranded DNA and has DNA-dependent ATPase activity. Part of the RAD51 paralog protein complex BCDX2 which acts in the BRCA1-BRCA2-dependent HR pathway. Upon DNA damage, BCDX2 acts downstream of BRCA2 recruitment and upstream of RAD51 recruitment. BCDX2 binds predominantly to the intersection of the four duplex arms of the Holliday junction and to junction of replication forks. The BCDX2 complex was originally reported to bind single-stranded DNA, single-stranded gaps in duplex DNA and specifically to nicks in duplex DNA. The BCDX2 subcomplex RAD51B:RAD51C exhibits single-stranded DNA-dependent ATPase activity suggesting an involvement in early stages of the HR pathway. The chain is DNA repair protein RAD51 homolog 2 (RAD51B) from Homo sapiens (Human).